Reading from the N-terminus, the 239-residue chain is Trimethylguanosine synthase (239 aa).

It belongs to the methyltransferase superfamily. Trimethylguanosine synthase family. As to quaternary structure, monomer. Interacts with mug174; both proteins are required to maintain Cajal body integrity.

The protein resides in the nucleus. It is found in the cajal body. The enzyme catalyses a 5'-end (N(7)-methyl 5'-triphosphoguanosine)-ribonucleoside in snRNA + S-adenosyl-L-methionine = a 5'-end (N(2),N(7)-dimethyl 5'-triphosphoguanosine)-ribonucleoside in snRNA + S-adenosyl-L-homocysteine + H(+). It catalyses the reaction a 5'-end (N(7)-methyl 5'-triphosphoguanosine)-ribonucleoside in snoRNA + S-adenosyl-L-methionine = a 5'-end (N(2),N(7)-dimethyl 5'-triphosphoguanosine)-ribonucleoside in snoRNA + S-adenosyl-L-homocysteine + H(+). The catalysed reaction is a 5'-end (N(2),N(7)-dimethyl 5'-triphosphoguanosine)-ribonucleoside in snRNA + S-adenosyl-L-methionine = a 5'-end (N(2),N(2),N(7)-trimethyl 5'-triphosphoguanosine)-ribonucleoside in snRNA + S-adenosyl-L-homocysteine + H(+). It carries out the reaction a 5'-end (N(2),N(7)-dimethyl 5'-triphosphoguanosine)-ribonucleoside in snoRNA + S-adenosyl-L-methionine = a 5'-end (N(2),N(2),N(7)-trimethyl 5'-triphosphoguanosine)-ribonucleoside in snoRNA + S-adenosyl-L-homocysteine + H(+). Its activity is regulated as follows. Substrate inhibited by S-adenosyl-L-homocysteine. Catalyzes the two serial methylation steps for the conversion of the 7-monomethylguanosine (m(7)G) caps of snRNAs and snoRNAs to a 2,2,7-trimethylguanosine (m(2,2,7)G) cap structure. The enzyme is specific for guanine, and N7 methylation must precede N2 methylation. Required for pre-mRNA splicing, pre-rRNA processing and small ribosomal subunit synthesis. Involved in nucleolar structural organization. The sequence is that of Trimethylguanosine synthase (tgs1) from Schizosaccharomyces pombe (strain 972 / ATCC 24843) (Fission yeast).